A 380-amino-acid chain; its full sequence is Cytochrome b (380 aa).

A run of 4 helical transmembrane segments spans residues 34–54 (FGSLLALCLVTQILTGLLLAM), 78–99 (WLIRNMHANGASFFFICIYMHI), 114–134 (WNTGVLLLLTLMATAFVGYVL), and 179–199 (FFALHFLLPFMIAGLTLIHLT). Heme b-binding residues include His84 and His98. Residues His183 and His197 each coordinate heme b. An a ubiquinone-binding site is contributed by His202. 4 helical membrane-spanning segments follow: residues 227 to 247 (LKDILGLALLLLPLTAMALFS), 289 to 309 (LGGVLALAASVLVLLLCPFLH), 321 to 341 (LSQSLFWILVANLLILTWIGS), and 348 to 368 (FIIIGQLASTTYFIILLILFP).

This sequence belongs to the cytochrome b family. In terms of assembly, the cytochrome bc1 complex contains 11 subunits: 3 respiratory subunits (MT-CYB, CYC1 and UQCRFS1), 2 core proteins (UQCRC1 and UQCRC2) and 6 low-molecular weight proteins (UQCRH/QCR6, UQCRB/QCR7, UQCRQ/QCR8, UQCR10/QCR9, UQCR11/QCR10 and a cleavage product of UQCRFS1). This cytochrome bc1 complex then forms a dimer. Heme b is required as a cofactor.

The protein localises to the mitochondrion inner membrane. In terms of biological role, component of the ubiquinol-cytochrome c reductase complex (complex III or cytochrome b-c1 complex) that is part of the mitochondrial respiratory chain. The b-c1 complex mediates electron transfer from ubiquinol to cytochrome c. Contributes to the generation of a proton gradient across the mitochondrial membrane that is then used for ATP synthesis. This chain is Cytochrome b (MT-CYB), found in Oceanodroma tristrami (Tristram's storm-petrel).